We begin with the raw amino-acid sequence, 506 residues long: Glycerol kinase (506 aa).

Residue Thr12 coordinates ADP. ATP is bound by residues Thr12, Thr13, and Ser14. Thr12 contributes to the sn-glycerol 3-phosphate binding site. Arg16 contributes to the ADP binding site. The sn-glycerol 3-phosphate site is built by Arg82, Glu83, Tyr134, and Asp246. Glycerol is bound by residues Arg82, Glu83, Tyr134, Asp246, and Gln247. ADP is bound by residues Thr268 and Gly312. ATP-binding residues include Thr268, Gly312, Gln316, and Gly413. The ADP site is built by Gly413 and Asn417.

It belongs to the FGGY kinase family.

The enzyme catalyses glycerol + ATP = sn-glycerol 3-phosphate + ADP + H(+). The protein operates within polyol metabolism; glycerol degradation via glycerol kinase pathway; sn-glycerol 3-phosphate from glycerol: step 1/1. With respect to regulation, inhibited by fructose 1,6-bisphosphate (FBP). Key enzyme in the regulation of glycerol uptake and metabolism. Catalyzes the phosphorylation of glycerol to yield sn-glycerol 3-phosphate. The protein is Glycerol kinase of Leifsonia xyli subsp. xyli (strain CTCB07).